Reading from the N-terminus, the 131-residue chain is Small ribosomal subunit protein bS6 (131 aa).

Positions 96 to 131 (ITEASPMAKAKDERDSRRGPAGDRSYDEANAEEIAE) are disordered. The segment covering 104–122 (KAKDERDSRRGPAGDRSYD) has biased composition (basic and acidic residues).

It belongs to the bacterial ribosomal protein bS6 family.

Its function is as follows. Binds together with bS18 to 16S ribosomal RNA. The protein is Small ribosomal subunit protein bS6 of Shewanella oneidensis (strain ATCC 700550 / JCM 31522 / CIP 106686 / LMG 19005 / NCIMB 14063 / MR-1).